The chain runs to 173 residues: Pathogenesis-related protein 1C (173 aa).

The signal sequence occupies residues 1–20; that stretch reads MSTSAVLFLLLAVFAAGASA.

Belongs to the thaumatin family.

The polypeptide is Pathogenesis-related protein 1C (Hordeum vulgare (Barley)).